Consider the following 1405-residue polypeptide: DNA-directed RNA polymerase subunit beta' (1405 aa).

Residues C71, C73, C86, and C89 each contribute to the Zn(2+) site. The Mg(2+) site is built by D462, D464, and D466. Positions 820, 893, 900, and 903 each coordinate Zn(2+).

It belongs to the RNA polymerase beta' chain family. The RNAP catalytic core consists of 2 alpha, 1 beta, 1 beta' and 1 omega subunit. When a sigma factor is associated with the core the holoenzyme is formed, which can initiate transcription. The cofactor is Mg(2+). Requires Zn(2+) as cofactor.

It catalyses the reaction RNA(n) + a ribonucleoside 5'-triphosphate = RNA(n+1) + diphosphate. In terms of biological role, DNA-dependent RNA polymerase catalyzes the transcription of DNA into RNA using the four ribonucleoside triphosphates as substrates. This chain is DNA-directed RNA polymerase subunit beta', found in Methylorubrum extorquens (strain CM4 / NCIMB 13688) (Methylobacterium extorquens).